An 827-amino-acid chain; its full sequence is Transcription factor SOX-6 (827 aa).

The span at 1-10 (MSSKQATSPF) shows a compositional bias: polar residues. Positions 1 to 51 (MSSKQATSPFACTADGEEAMTQDLTSREKEEGSDQHPASHLPLHPIMHNKP) are disordered. The segment covering 25–34 (TSREKEEGSD) has biased composition (basic and acidic residues). Residue Thr-119 is modified to Phosphothreonine. A coiled-coil region spans residues 184–262 (LAEKERQLST…LLQQQIQVQG (79 aa)). Disordered stretches follow at residues 334-361 (QINPRLKGISDRFGRNLDPSEHGGGHSY) and 379-470 (VSPG…PIGG). The segment covering 341–357 (GISDRFGRNLDPSEHGG) has biased composition (basic and acidic residues). A Phosphoserine modification is found at Ser-399. A Phosphothreonine modification is found at Thr-401. Residues Lys-404 and Lys-417 each participate in a glycyl lysine isopeptide (Lys-Gly) (interchain with G-Cter in SUMO) cross-link. Composition is skewed to polar residues over residues 421–431 (TAQPLNLSSRP) and 439–461 (SPTSPTQNLFPASKTSPVNLPNK). Phosphoserine is present on residues Ser-439 and Ser-442. Residues 620-688 (IKRPMNAFMV…IHLEKYPNYK (69 aa)) constitute a DNA-binding region (HMG box). 2 disordered regions span residues 752–772 (TPSPQMTSDCSSTSASPEPSL) and 786–827 (ASLA…VSAN). Over residues 795–808 (NGEDEMEAYDDYED) the composition is skewed to acidic residues.

As to quaternary structure, homodimer. Interacts with DAZAP2. May interact with CENPK. Sumoylation inhibits the transcriptional activity. In terms of tissue distribution, highly expressed in testis.

It is found in the nucleus. It localises to the cytoplasm. Functionally, transcription factor that plays a key role in several developmental processes, including neurogenesis, chondrocytes differentiation and cartilage formation. Specifically binds the 5'-AACAAT-3' DNA motif present in enhancers and super-enhancers and promotes expression of genes important for chondrogenesis. Required for overt chondrogenesis when condensed prechondrocytes differentiate into early stage chondrocytes: SOX5 and SOX6 cooperatively bind with SOX9 on active enhancers and super-enhancers associated with cartilage-specific genes, and thereby potentiate SOX9's ability to transactivate. Not involved in precartilaginous condensation, the first step in chondrogenesis, during which skeletal progenitors differentiate into prechondrocytes. Together with SOX5, required to form and maintain a pool of highly proliferating chondroblasts between epiphyses and metaphyses, to form columnar chondroblasts, delay chondrocyte prehypertrophy but promote hypertrophy, and to delay terminal differentiation of chondrocytes on contact with ossification fronts. Binds to the proximal promoter region of the myelin protein MPZ gene, and is thereby involved in the differentiation of oligodendroglia in the developing spinal tube. Binds to the gene promoter of MBP and acts as a transcriptional repressor. The sequence is that of Transcription factor SOX-6 from Mus musculus (Mouse).